Reading from the N-terminus, the 27-residue chain is Pregnancy-associated glycoprotein 62 (27 aa).

The protein belongs to the peptidase A1 family. Glycosylated. Placenta.

The sequence is that of Pregnancy-associated glycoprotein 62 (PAG62) from Capra hircus (Goat).